A 1351-amino-acid chain; its full sequence is D-lysergyl-peptide-synthetase subunit 2 (1351 aa).

The tract at residues 285 to 684 (RCLSQPTASA…GRKDTQVKLR (400 aa)) is adenylation (A) domain. The 77-residue stretch at 828 to 904 (APQTTTEKLL…ALACVVRSGK (77 aa)) folds into the Carrier domain. An O-(pantetheine 4'-phosphoryl)serine modification is found at Ser-865. A condensation (C) domain region spans residues 941 to 1340 (EDVYPCTPLQ…LIRDILAVPQ (400 aa)).

It belongs to the NRP synthetase family.

It functions in the pathway alkaloid biosynthesis; ergot alkaloid biosynthesis. In terms of biological role, D-lysergyl-peptide-synthetase subunit 2; part of the gene cluster that mediates the biosynthesis of fungal ergot alkaloid ergovaline, the predominant ergopeptine product in E.festucae var. lolii. DmaW catalyzes the first step of ergot alkaloid biosynthesis by condensing dimethylallyl diphosphate (DMAP) and tryptophan to form 4-dimethylallyl-L-tryptophan. The second step is catalyzed by the methyltransferase easF that methylates 4-dimethylallyl-L-tryptophan in the presence of S-adenosyl-L-methionine, resulting in the formation of 4-dimethylallyl-L-abrine. The catalase easC and the FAD-dependent oxidoreductase easE then transform 4-dimethylallyl-L-abrine to chanoclavine-I which is further oxidized by easD in the presence of NAD(+), resulting in the formation of chanoclavine-I aldehyde. Agroclavine dehydrogenase easG then mediates the conversion of chanoclavine-I aldehyde to agroclavine via a non-enzymatic adduct reaction: the substrate is an iminium intermediate that is formed spontaneously from chanoclavine-I aldehyde in the presence of glutathione. The presence of easA is not required to complete this reaction. Further conversion of agroclavine to paspalic acid is a two-step process involving oxidation of agroclavine to elymoclavine and of elymoclavine to paspalic acid, the second step being performed by the elymoclavine oxidase cloA. Paspalic acid is then further converted to D-lysergic acid. Ergovaline is assembled from D-lysergic acid and three different amino acids by the D-lysergyl-peptide-synthetase composed of a monomudular (lpsB) and a trimodular (lpsA) nonribosomal peptide synthetase subunit. The polypeptide is D-lysergyl-peptide-synthetase subunit 2 (Epichloe festucae var. lolii (Neotyphodium lolii)).